A 512-amino-acid chain; its full sequence is Glutathione-binding protein GsiB (512 aa).

A signal peptide spans 1–26; sequence MARAVHRSGLVALGIATALMASCAFA.

This sequence belongs to the bacterial solute-binding protein 5 family. In terms of assembly, the complex is composed of two ATP-binding proteins (GsiA), two transmembrane proteins (GsiC and GsiD) and a solute-binding protein (GsiB).

Its subcellular location is the periplasm. In terms of biological role, part of the ABC transporter complex GsiABCD involved in glutathione import. Binds glutathione. This chain is Glutathione-binding protein GsiB, found in Escherichia coli O157:H7.